A 262-amino-acid polypeptide reads, in one-letter code: MAELVCDALATLTRNTYGDNDESAKFCRMFRTMIRDSGLYGNIENWRAAFYRERLPKRMSHSTVSIQLDNLEREVLKIRAEGFCQGYTRKERTLNAFDLSDDGKGNTIIKPTTHLSSIILQNSYNSAFKLPKIPDGLLEKTRYELEEEKKNNDILKQKIKELENTISQLENYENEAKASQFVLEHLKFTNESLKIQRDEAQICLIGLCNKFGLQCEIDNSIHVTESDKKGKRKGRKNRRIEVSFGAPGHDLTEQISTLSDVE.

A coiled-coil region spans residues 138–179; the sequence is LEKTRYELEEEKKNNDILKQKIKELENTISQLENYENEAKAS. Residues 224–248 form a disordered region; the sequence is TESDKKGKRKGRKNRRIEVSFGAPG. Residues 229–238 show a composition bias toward basic residues; it reads KGKRKGRKNR.

It belongs to the rotavirus NSP3 family.

The protein resides in the host cytoplasm. Its function is as follows. May play a role in stimulating the translation of viral mRNAs. The chain is Non-structural protein 3 from Rotavirus X (strain RVX/Human/China/NADRV-J19/1997/GXP[X]) (RV ADRV-N).